A 557-amino-acid chain; its full sequence is UvrABC system protein C (557 aa).

The region spanning 14-89 is the GIY-YIG domain; that stretch reads EEPGVYIFKN…IKKYRPKYNV (76 aa). The region spanning 194–229 is the UVR domain; the sequence is EEVFDYLKEKMETHSKMLDFENAAKYRDLLLNLSNV.

Belongs to the UvrC family. As to quaternary structure, interacts with UvrB in an incision complex.

Its subcellular location is the cytoplasm. The UvrABC repair system catalyzes the recognition and processing of DNA lesions. UvrC both incises the 5' and 3' sides of the lesion. The N-terminal half is responsible for the 3' incision and the C-terminal half is responsible for the 5' incision. The protein is UvrABC system protein C of Thermotoga maritima (strain ATCC 43589 / DSM 3109 / JCM 10099 / NBRC 100826 / MSB8).